Consider the following 1595-residue polypeptide: Pentafunctional AROM polypeptide (1595 aa).

Positions 1–384 (MGVPTKISIL…HEPRASTVSN (384 aa)) are 3-dehydroquinate synthase. NAD(+) is bound by residues 44–46 (DTN), 81–84 (ESSK), 114–116 (GGV), and Asp119. 7-phospho-2-dehydro-3-deoxy-D-arabino-heptonate is bound at residue Arg130. Position 139–140 (139–140 (TT)) interacts with NAD(+). Residues Asp146 and Lys152 each coordinate 7-phospho-2-dehydro-3-deoxy-D-arabino-heptonate. NAD(+) is bound at residue Lys161. 7-phospho-2-dehydro-3-deoxy-D-arabino-heptonate is bound at residue Asn162. NAD(+) is bound by residues 179–182 (FLNT) and Asn190. Glu194 is a Zn(2+) binding site. Residues 194-197 (EVIK) and Lys250 each bind 7-phospho-2-dehydro-3-deoxy-D-arabino-heptonate. Residue Glu260 is the Proton acceptor; for 3-dehydroquinate synthase activity of the active site. 7-phospho-2-dehydro-3-deoxy-D-arabino-heptonate contacts are provided by residues 264–268 (RNLLN) and His271. Residue His271 participates in Zn(2+) binding. His275 (proton acceptor; for 3-dehydroquinate synthase activity) is an active-site residue. The 7-phospho-2-dehydro-3-deoxy-D-arabino-heptonate site is built by His287 and Lys356. Residue His287 coordinates Zn(2+). The EPSP synthase stretch occupies residues 397–842 (VSPGVPKGLD…WDSLAQTFKV (446 aa)). Cys824 serves as the catalytic For EPSP synthase activity. The segment at 866-1057 (ASIFIIGMRG…RRKENTFFVS (192 aa)) is shikimate kinase. 872–879 (GMRGAGKT) lines the ATP pocket. Residues 1058–1278 (LTLPDLSLAA…AAPGQLSARE (221 aa)) form a 3-dehydroquinase region. The active-site Proton acceptor; for 3-dehydroquinate dehydratase activity is His1181. Catalysis depends on Lys1209, which acts as the Schiff-base intermediate with substrate; for 3-dehydroquinate dehydratase activity. The segment at 1291–1595 (AKKFAVIGNP…MGVSPSEDIL (305 aa)) is shikimate dehydrogenase.

In the N-terminal section; belongs to the sugar phosphate cyclases superfamily. Dehydroquinate synthase family. The protein in the 2nd section; belongs to the EPSP synthase family. It in the 3rd section; belongs to the shikimate kinase family. This sequence in the 4th section; belongs to the type-I 3-dehydroquinase family. In the C-terminal section; belongs to the shikimate dehydrogenase family. In terms of assembly, homodimer. Requires Zn(2+) as cofactor.

It is found in the cytoplasm. The enzyme catalyses 7-phospho-2-dehydro-3-deoxy-D-arabino-heptonate = 3-dehydroquinate + phosphate. It carries out the reaction 3-dehydroquinate = 3-dehydroshikimate + H2O. It catalyses the reaction shikimate + NADP(+) = 3-dehydroshikimate + NADPH + H(+). The catalysed reaction is shikimate + ATP = 3-phosphoshikimate + ADP + H(+). The enzyme catalyses 3-phosphoshikimate + phosphoenolpyruvate = 5-O-(1-carboxyvinyl)-3-phosphoshikimate + phosphate. It functions in the pathway metabolic intermediate biosynthesis; chorismate biosynthesis; chorismate from D-erythrose 4-phosphate and phosphoenolpyruvate: step 2/7. The protein operates within metabolic intermediate biosynthesis; chorismate biosynthesis; chorismate from D-erythrose 4-phosphate and phosphoenolpyruvate: step 3/7. It participates in metabolic intermediate biosynthesis; chorismate biosynthesis; chorismate from D-erythrose 4-phosphate and phosphoenolpyruvate: step 4/7. Its pathway is metabolic intermediate biosynthesis; chorismate biosynthesis; chorismate from D-erythrose 4-phosphate and phosphoenolpyruvate: step 5/7. It functions in the pathway metabolic intermediate biosynthesis; chorismate biosynthesis; chorismate from D-erythrose 4-phosphate and phosphoenolpyruvate: step 6/7. Functionally, the AROM polypeptide catalyzes 5 consecutive enzymatic reactions in prechorismate polyaromatic amino acid biosynthesis. The protein is Pentafunctional AROM polypeptide of Ajellomyces capsulatus (strain G186AR / H82 / ATCC MYA-2454 / RMSCC 2432) (Darling's disease fungus).